We begin with the raw amino-acid sequence, 371 residues long: Probable L-aspartate decarboxylase (371 aa).

N6-(pyridoxal phosphate)lysine is present on K232.

This sequence belongs to the group II decarboxylase family. MfnA subfamily. It depends on pyridoxal 5'-phosphate as a cofactor.

It catalyses the reaction L-aspartate + H(+) = beta-alanine + CO2. It functions in the pathway cofactor biosynthesis; coenzyme A biosynthesis. Functionally, catalyzes the decarboxylation of L-aspartate to produce beta-alanine. This chain is Probable L-aspartate decarboxylase, found in Pyrococcus furiosus (strain ATCC 43587 / DSM 3638 / JCM 8422 / Vc1).